Reading from the N-terminus, the 57-residue chain is Protein GnsA (57 aa).

Belongs to the gns family.

In Escherichia coli O6:H1 (strain CFT073 / ATCC 700928 / UPEC), this protein is Protein GnsA (gnsA).